The sequence spans 281 residues: Kinetochore-associated protein NSL1 homolog (281 aa).

At serine 4 the chain carries Phosphoserine. Phosphothreonine is present on threonine 244.

In terms of assembly, component of the MIS12 complex composed of MIS12, DSN1, NSL1/DC8 and PMF1. Interacts with KNL1.

The protein resides in the nucleus. It is found in the chromosome. Its subcellular location is the centromere. The protein localises to the kinetochore. Part of the MIS12 complex which is required for normal chromosome alignment and segregation and kinetochore formation during mitosis. The protein is Kinetochore-associated protein NSL1 homolog (NSL1) of Homo sapiens (Human).